Reading from the N-terminus, the 1562-residue chain is Neuralized-like protein 4 (1562 aa).

The segment covering 1–42 (MAAGSGGSGGSGGGPGPGPGGGGGPSGSGSGPGSNGGLGSGG) has biased composition (gly residues). Disordered stretches follow at residues 1–48 (MAAG…HPRT) and 207–236 (PEPGFSPPTPIPTPPLEPLAPTEDSALAEQ). 2 NHR domains span residues 41 to 207 (GGEL…VLPP) and 317 to 484 (ALLF…IVHN). The segment covering 207-224 (PEPGFSPPTPIPTPPLEP) has biased composition (pro residues). Ser502 carries the post-translational modification Phosphoserine. NHR domains follow at residues 520 to 686 (RLLF…IVDD) and 716 to 884 (DLRF…ITNA). The tract at residues 691-716 (PVPEPLPEGNNQVSPSSPSSGAGGSD) is disordered. Position 907 is a phosphoserine (Ser907). The region spanning 913–1086 (AHRFHSTCGK…PVRGVSIVSS (174 aa)) is the NHR 5 domain. The tract at residues 1086 to 1123 (STRLEESEGTQPPSPSSDTGSEGEEDDEGEEHGLGGQN) is disordered. The span at 1106–1115 (SEGEEDDEGE) shows a compositional bias: acidic residues. Positions 1131-1294 (TLEFLENHGK…QCEQVTIVNP (164 aa)) constitute an NHR 6 domain.

As to quaternary structure, interacts with CCP110; this interaction propmotes CCP110 ubiquitination and degradation via the proteasome pathway. Via its interaction with CCP110, may indirectly interact with CEP97. Interacts with the E3 ubiquitin-protein ligase HERC2 and UBE3A. May interact with MAPK6 and hence mediate MAPK6 interaction with UBE3A. Interaction with UBE3A may be indirect and mediated by HERC2. In terms of processing, ubiquitinated; undergoes HERC2-dependent 'Lys-48' ubiquitination. This ubiquitination leads to proteasomal degradation. As to expression, widely expressed at high levels (including brain).

The protein localises to the cytoplasm. The protein resides in the cytoskeleton. It localises to the microtubule organizing center. Its subcellular location is the centrosome. It is found in the centriole. Its function is as follows. Promotes CCP110 ubiquitination and proteasome-dependent degradation. By counteracting accumulation of CP110, maintains normal centriolar homeostasis and preventing formation of ectopic microtubular organizing centers. The sequence is that of Neuralized-like protein 4 (NEURL4) from Homo sapiens (Human).